Consider the following 200-residue polypeptide: NADH-quinone oxidoreductase subunit B (200 aa).

The [4Fe-4S] cluster site is built by cysteine 78, cysteine 79, cysteine 144, and cysteine 174.

Belongs to the complex I 20 kDa subunit family. In terms of assembly, NDH-1 is composed of 14 different subunits. Subunits NuoB, C, D, E, F, and G constitute the peripheral sector of the complex. [4Fe-4S] cluster is required as a cofactor.

The protein localises to the cell membrane. The enzyme catalyses a quinone + NADH + 5 H(+)(in) = a quinol + NAD(+) + 4 H(+)(out). In terms of biological role, NDH-1 shuttles electrons from NADH, via FMN and iron-sulfur (Fe-S) centers, to quinones in the respiratory chain. The immediate electron acceptor for the enzyme in this species is believed to be ubiquinone. Couples the redox reaction to proton translocation (for every two electrons transferred, four hydrogen ions are translocated across the cytoplasmic membrane), and thus conserves the redox energy in a proton gradient. The chain is NADH-quinone oxidoreductase subunit B from Dehalococcoides mccartyi (strain ATCC BAA-2266 / KCTC 15142 / 195) (Dehalococcoides ethenogenes (strain 195)).